Consider the following 74-residue polypeptide: Coleoptericin (74 aa).

Residues 1–74 form a disordered region; the sequence is SLQGGAPNFP…TWHVGGTYRR (74 aa).

The protein belongs to the coleoptericin family.

It is found in the secreted. Its function is as follows. Responsible for the anti Gram-negative activity of immune hemolymph of Z.atratus. The chain is Coleoptericin from Zophobas atratus (Giant mealworm beetle).